The chain runs to 681 residues: Methionine--tRNA ligase (681 aa).

The short motif at 14–24 (PYANGSIHLGH) is the 'HIGH' region element. Residues Cys-145, Cys-148, Cys-158, and Cys-161 each coordinate Zn(2+). Residues 331 to 335 (KMSKS) carry the 'KMSKS' region motif. Lys-334 contacts ATP. The region spanning 579–681 (AFAAIDLRVA…SGAKPGQRIK (103 aa)) is the tRNA-binding domain.

Belongs to the class-I aminoacyl-tRNA synthetase family. MetG type 1 subfamily. Homodimer. The cofactor is Zn(2+).

The protein resides in the cytoplasm. The enzyme catalyses tRNA(Met) + L-methionine + ATP = L-methionyl-tRNA(Met) + AMP + diphosphate. In terms of biological role, is required not only for elongation of protein synthesis but also for the initiation of all mRNA translation through initiator tRNA(fMet) aminoacylation. In Pseudomonas fluorescens (strain ATCC BAA-477 / NRRL B-23932 / Pf-5), this protein is Methionine--tRNA ligase.